We begin with the raw amino-acid sequence, 339 residues long: Dihydroorotate dehydrogenase (quinone) (339 aa).

Residues 62 to 66 (AGMDK) and T86 contribute to the FMN site. K66 is a substrate binding site. Position 111–115 (111–115 (NRMGF)) interacts with substrate. 2 residues coordinate FMN: N139 and N172. Residue N172 participates in substrate binding. S175 (nucleophile) is an active-site residue. N177 provides a ligand contact to substrate. Positions 217 and 245 each coordinate FMN. Position 246–247 (246–247 (NT)) interacts with substrate. FMN contacts are provided by residues G268, G297, and 318–319 (YS).

Belongs to the dihydroorotate dehydrogenase family. Type 2 subfamily. Monomer. It depends on FMN as a cofactor.

The protein localises to the cell membrane. It catalyses the reaction (S)-dihydroorotate + a quinone = orotate + a quinol. It participates in pyrimidine metabolism; UMP biosynthesis via de novo pathway; orotate from (S)-dihydroorotate (quinone route): step 1/1. Functionally, catalyzes the conversion of dihydroorotate to orotate with quinone as electron acceptor. The protein is Dihydroorotate dehydrogenase (quinone) of Shewanella baltica (strain OS155 / ATCC BAA-1091).